The chain runs to 213 residues: Uracil phosphoribosyltransferase (213 aa).

5-phospho-alpha-D-ribose 1-diphosphate contacts are provided by residues arginine 78, arginine 103, and 130–138 (DPMLATGGS). Residues isoleucine 193 and 198–200 (GDA) each bind uracil. Residue aspartate 199 participates in 5-phospho-alpha-D-ribose 1-diphosphate binding.

The protein belongs to the UPRTase family. Requires Mg(2+) as cofactor.

The enzyme catalyses UMP + diphosphate = 5-phospho-alpha-D-ribose 1-diphosphate + uracil. Its pathway is pyrimidine metabolism; UMP biosynthesis via salvage pathway; UMP from uracil: step 1/1. With respect to regulation, allosterically activated by GTP. Its function is as follows. Catalyzes the conversion of uracil and 5-phospho-alpha-D-ribose 1-diphosphate (PRPP) to UMP and diphosphate. The chain is Uracil phosphoribosyltransferase from Bordetella pertussis (strain Tohama I / ATCC BAA-589 / NCTC 13251).